Consider the following 435-residue polypeptide: Indole diterpene prenyltransferase atmD (435 aa).

L-tryptophan-binding positions include 81–82 and Glu-90; that span reads AY. Arg-103, Lys-190, Arg-261, Lys-263, Tyr-265, Tyr-346, and Tyr-413 together coordinate substrate.

It belongs to the tryptophan dimethylallyltransferase family.

In terms of biological role, indole diterpene prenyltransferase; part of the ATM2 gene cluster that mediates the biosynthesis of aflatrem, a tremorgenic mycotoxin with acute neurotoxic effects. Synthesis of geranylgeranyl diphosphate (GGPP) by AtmG (a GGPP synthase) precedes condensation of GGPP with indole 3-glycerol phosphate, followed by epoxidation and cyclization by AtmM (a FAD-dependent monooxygenase) and AtmC (a prenyltransferase) to produce paspaline. AtmB is also essential for paspaline production, but its exact role has not been identified yet. AtmP, a cytochrome P450 monooxygenase, subsequently converts paspaline to 13-desoxypaxilline via PC-M6 by removal of the C-30 methyl group and oxidation at C-10. AtmQ, a cytochrome P450 monooxygenase, then catalyzes the oxidation of 13-desoxypaxilline, first at C-7 to produce paspalicine and then at C-13 to form paspalinine. Finally, AtmD prenylates paspalinine to form aflatrem. The polypeptide is Indole diterpene prenyltransferase atmD (Aspergillus flavus).